A 206-amino-acid polypeptide reads, in one-letter code: Endoplasmic reticulum transmembrane protein 1 (206 aa).

Residues 1-7 (MSLYFTT) lie on the Lumenal side of the membrane. Residues 8–28 (LFLLLTVEMVMLFIFVLPLPF) form a helical membrane-spanning segment. Residues 29-45 (RIRRGIFSTYNQLTAKQ) lie on the Cytoplasmic side of the membrane. A helical transmembrane segment spans residues 46–66 (QIKTIIFITGCLVGLLFIDSW). Over 67–104 (KRSQIRVSLYHNDNSGSIGSSAVTPIQALASRAYNQRN) the chain is Lumenal. A helical membrane pass occupies residues 105 to 125 (MYISGFILYFSICIPTVMSIV). Topologically, residues 126–206 (KRLVKYQGLI…AAAEASKKGN (81 aa)) are cytoplasmic. Positions 140–163 (KQKLNKPSSNSKKDSNEADSTKLQ) are disordered. Residues 150 to 163 (SKKDSNEADSTKLQ) are compositionally biased toward basic and acidic residues. Lys190 participates in a covalent cross-link: Glycyl lysine isopeptide (Lys-Gly) (interchain with G-Cter in ubiquitin). Positions 203 to 206 (KKGN) match the Di-lysine motif motif.

It belongs to the BCAP29/BCAP31 family.

The protein localises to the endoplasmic reticulum membrane. Functionally, may play a role in anterograde transport of membrane proteins from the endoplasmic reticulum to the Golgi. The protein is Endoplasmic reticulum transmembrane protein 1 (YET1) of Saccharomyces cerevisiae (strain ATCC 204508 / S288c) (Baker's yeast).